Reading from the N-terminus, the 364-residue chain is 3-dehydroquinate synthase (364 aa).

Residues 71–76, 105–109, 129–130, Lys-142, Lys-151, and 169–172 each bind NAD(+); these read DGEQYK, GVIGD, TT, and CLKT. Glu-184, His-247, and His-264 together coordinate Zn(2+).

It belongs to the sugar phosphate cyclases superfamily. Dehydroquinate synthase family. Co(2+) serves as cofactor. Zn(2+) is required as a cofactor. The cofactor is NAD(+).

It is found in the cytoplasm. The enzyme catalyses 7-phospho-2-dehydro-3-deoxy-D-arabino-heptonate = 3-dehydroquinate + phosphate. It functions in the pathway metabolic intermediate biosynthesis; chorismate biosynthesis; chorismate from D-erythrose 4-phosphate and phosphoenolpyruvate: step 2/7. Catalyzes the conversion of 3-deoxy-D-arabino-heptulosonate 7-phosphate (DAHP) to dehydroquinate (DHQ). This is 3-dehydroquinate synthase from Klebsiella pneumoniae (strain 342).